The primary structure comprises 374 residues: MKFELDTTDGRARRGRLIFDRGTVETPAFMPVGTYGTVKGMTPEEVRATGADILLGNTFHLWLRPGEEIMRKHGDLHDFMNWQRPILTDSGGFQVFSLGDIRKITEEGVHFRSPINGEKIFLDPEKSMQIQDSLGSDVVMIFDECTPYPATHDEARKSMQMSLRWAKRSRDEFDRLENPNSLFGIIQGGVFEDLRDESVKGLLDIGFDGYAVGGLAVGEPKADMHRILEHVCPQIPADKPRYLMGVGKPEDLVEGVRRGVDMFDCVMPTRNARNGHLFTSEGVIKIRNARHRDDTATLDPKCDCYTCKNYSRAYLYHLDRCNEILGARLNTIHNLRYYQMLMEGLRGAIETGTLDAFVKEFYTSFGREVPELIV.

Asp89 (proton acceptor) is an active-site residue. Substrate is bound by residues 89 to 93 (DSGGF), Asp143, Gln187, and Gly214. The RNA binding stretch occupies residues 245–251 (GVGKPED). The active-site Nucleophile is the Asp264. The RNA binding; important for wobble base 34 recognition stretch occupies residues 269 to 273 (TRNAR). Residues Cys302, Cys304, Cys307, and His333 each contribute to the Zn(2+) site.

Belongs to the queuine tRNA-ribosyltransferase family. As to quaternary structure, homodimer. Within each dimer, one monomer is responsible for RNA recognition and catalysis, while the other monomer binds to the replacement base PreQ1. It depends on Zn(2+) as a cofactor.

It carries out the reaction 7-aminomethyl-7-carbaguanine + guanosine(34) in tRNA = 7-aminomethyl-7-carbaguanosine(34) in tRNA + guanine. Its pathway is tRNA modification; tRNA-queuosine biosynthesis. Functionally, catalyzes the base-exchange of a guanine (G) residue with the queuine precursor 7-aminomethyl-7-deazaguanine (PreQ1) at position 34 (anticodon wobble position) in tRNAs with GU(N) anticodons (tRNA-Asp, -Asn, -His and -Tyr). Catalysis occurs through a double-displacement mechanism. The nucleophile active site attacks the C1' of nucleotide 34 to detach the guanine base from the RNA, forming a covalent enzyme-RNA intermediate. The proton acceptor active site deprotonates the incoming PreQ1, allowing a nucleophilic attack on the C1' of the ribose to form the product. After dissociation, two additional enzymatic reactions on the tRNA convert PreQ1 to queuine (Q), resulting in the hypermodified nucleoside queuosine (7-(((4,5-cis-dihydroxy-2-cyclopenten-1-yl)amino)methyl)-7-deazaguanosine). The polypeptide is Queuine tRNA-ribosyltransferase (Shewanella frigidimarina (strain NCIMB 400)).